The sequence spans 404 residues: Propionate kinase (404 aa).

Belongs to the acetokinase family. PduW subfamily.

The protein localises to the cytoplasm. It carries out the reaction propanoate + ATP = propanoyl phosphate + ADP. The protein operates within polyol metabolism; 1,2-propanediol degradation. In terms of biological role, works with phosphate acetyltransferase (pta) to capture exogenous propionate and regenerate propionyl-CoA during degradation of 1,2-propanediol (1,2-PD). The protein is Propionate kinase of Escherichia fergusonii (strain ATCC 35469 / DSM 13698 / CCUG 18766 / IAM 14443 / JCM 21226 / LMG 7866 / NBRC 102419 / NCTC 12128 / CDC 0568-73).